The following is a 281-amino-acid chain: 2-dehydro-3-deoxyphosphooctonate aldolase (281 aa).

It belongs to the KdsA family.

Its subcellular location is the cytoplasm. It catalyses the reaction D-arabinose 5-phosphate + phosphoenolpyruvate + H2O = 3-deoxy-alpha-D-manno-2-octulosonate-8-phosphate + phosphate. It participates in carbohydrate biosynthesis; 3-deoxy-D-manno-octulosonate biosynthesis; 3-deoxy-D-manno-octulosonate from D-ribulose 5-phosphate: step 2/3. It functions in the pathway bacterial outer membrane biogenesis; lipopolysaccharide biosynthesis. The polypeptide is 2-dehydro-3-deoxyphosphooctonate aldolase (Pseudomonas syringae pv. syringae (strain B728a)).